Here is a 250-residue protein sequence, read N- to C-terminus: Phosphoribosylaminoimidazole-succinocarboxamide synthase (250 aa).

This sequence belongs to the SAICAR synthetase family.

The catalysed reaction is 5-amino-1-(5-phospho-D-ribosyl)imidazole-4-carboxylate + L-aspartate + ATP = (2S)-2-[5-amino-1-(5-phospho-beta-D-ribosyl)imidazole-4-carboxamido]succinate + ADP + phosphate + 2 H(+). It participates in purine metabolism; IMP biosynthesis via de novo pathway; 5-amino-1-(5-phospho-D-ribosyl)imidazole-4-carboxamide from 5-amino-1-(5-phospho-D-ribosyl)imidazole-4-carboxylate: step 1/2. This Bifidobacterium longum (strain DJO10A) protein is Phosphoribosylaminoimidazole-succinocarboxamide synthase.